A 261-amino-acid polypeptide reads, in one-letter code: Cytochrome c oxidase subunit 3 (261 aa).

Topologically, residues 1–15 (MTHQTHAYHMVNPSP) are mitochondrial matrix. Residues 16–34 (WPLTGALSALLMTSGLIMW) traverse the membrane as a helical segment. The Mitochondrial intermembrane segment spans residues 35–40 (FHFNSM). Residues 41-66 (YLLMLGLTTNTLTMYQWWRDIVREST) traverse the membrane as a helical segment. Over 67–72 (FQGHHT) the chain is Mitochondrial matrix. The chain crosses the membrane as a helical span at residues 73 to 105 (PIVQKGLRYGMILFIVSEVFFFAGFFWAFYHSS). At 106–128 (LAPTPELGGCWPPTGITPLNPME) the chain is on the mitochondrial intermembrane side. Residues 129-152 (VPLLNTSVLLASGVSITWAHHSLM) traverse the membrane as a helical segment. Residues 153–155 (EGN) are Mitochondrial matrix-facing. Residues 156 to 183 (RKHMLQALFITISLGIYFTLLQASEYYE) traverse the membrane as a helical segment. The Mitochondrial intermembrane segment spans residues 184 to 190 (TPFTISD). A helical membrane pass occupies residues 191-223 (GIYGSTFFMATGFHGLHVIIGSTFLIVCFVRQL). Residues 224-232 (KFHFTSNHH) lie on the Mitochondrial matrix side of the membrane. Residues 233 to 256 (FGFEAAAWYWHFVDVVWLFLYVSI) form a helical membrane-spanning segment. Over 257–261 (YWWGS) the chain is Mitochondrial intermembrane.

It belongs to the cytochrome c oxidase subunit 3 family. Component of the cytochrome c oxidase (complex IV, CIV), a multisubunit enzyme composed of 14 subunits. The complex is composed of a catalytic core of 3 subunits MT-CO1, MT-CO2 and MT-CO3, encoded in the mitochondrial DNA, and 11 supernumerary subunits COX4I, COX5A, COX5B, COX6A, COX6B, COX6C, COX7A, COX7B, COX7C, COX8 and NDUFA4, which are encoded in the nuclear genome. The complex exists as a monomer or a dimer and forms supercomplexes (SCs) in the inner mitochondrial membrane with NADH-ubiquinone oxidoreductase (complex I, CI) and ubiquinol-cytochrome c oxidoreductase (cytochrome b-c1 complex, complex III, CIII), resulting in different assemblies (supercomplex SCI(1)III(2)IV(1) and megacomplex MCI(2)III(2)IV(2)).

The protein resides in the mitochondrion inner membrane. The catalysed reaction is 4 Fe(II)-[cytochrome c] + O2 + 8 H(+)(in) = 4 Fe(III)-[cytochrome c] + 2 H2O + 4 H(+)(out). Functionally, component of the cytochrome c oxidase, the last enzyme in the mitochondrial electron transport chain which drives oxidative phosphorylation. The respiratory chain contains 3 multisubunit complexes succinate dehydrogenase (complex II, CII), ubiquinol-cytochrome c oxidoreductase (cytochrome b-c1 complex, complex III, CIII) and cytochrome c oxidase (complex IV, CIV), that cooperate to transfer electrons derived from NADH and succinate to molecular oxygen, creating an electrochemical gradient over the inner membrane that drives transmembrane transport and the ATP synthase. Cytochrome c oxidase is the component of the respiratory chain that catalyzes the reduction of oxygen to water. Electrons originating from reduced cytochrome c in the intermembrane space (IMS) are transferred via the dinuclear copper A center (CU(A)) of subunit 2 and heme A of subunit 1 to the active site in subunit 1, a binuclear center (BNC) formed by heme A3 and copper B (CU(B)). The BNC reduces molecular oxygen to 2 water molecules using 4 electrons from cytochrome c in the IMS and 4 protons from the mitochondrial matrix. The polypeptide is Cytochrome c oxidase subunit 3 (MT-CO3) (Phoca vitulina (Harbor seal)).